Here is a 194-residue protein sequence, read N- to C-terminus: PRELI domain containing protein 3B (194 aa).

One can recognise a PRELI/MSF1 domain in the interval 1-172 (MKIWTSEHVF…VIHKLNAEIE (172 aa)). Residues Ser-46 and Ser-51 each carry the phosphoserine modification.

Belongs to the slowmo family.

This chain is PRELI domain containing protein 3B (PRELID3B), found in Bos taurus (Bovine).